A 213-amino-acid polypeptide reads, in one-letter code: A-type ATP synthase subunit D (213 aa).

Belongs to the V-ATPase D subunit family. Has multiple subunits with at least A(3), B(3), C, D, E, F, H, I and proteolipid K(x).

It is found in the cell membrane. In terms of biological role, component of the A-type ATP synthase that produces ATP from ADP in the presence of a proton gradient across the membrane. This Saccharolobus islandicus (strain L.S.2.15 / Lassen #1) (Sulfolobus islandicus) protein is A-type ATP synthase subunit D.